A 107-amino-acid chain; its full sequence is Thioredoxin (107 aa).

In terms of domain architecture, Thioredoxin spans 2-107 (SVSQVTDASF…LASTLNKYIS (106 aa)). Catalysis depends on nucleophile residues cysteine 31 and cysteine 34. Cysteines 31 and 34 form a disulfide.

It belongs to the thioredoxin family.

The protein localises to the plastid. The protein resides in the chloroplast. Its function is as follows. Participates in various redox reactions through the reversible oxidation of its active center dithiol to a disulfide and catalyzes dithiol-disulfide exchange reactions. The polypeptide is Thioredoxin (trxA) (Pyropia yezoensis (Susabi-nori)).